A 163-amino-acid polypeptide reads, in one-letter code: Phosphopantetheine adenylyltransferase (163 aa).

Ser-10 is a substrate binding site. Residues 10-11 (SF) and His-18 contribute to the ATP site. Residues Lys-42, Leu-74, and Arg-88 each coordinate substrate. ATP-binding positions include 89–91 (GLR), Glu-99, and 124–130 (YSFLSSS).

Belongs to the bacterial CoaD family. In terms of assembly, homohexamer. Requires Mg(2+) as cofactor.

It is found in the cytoplasm. It catalyses the reaction (R)-4'-phosphopantetheine + ATP + H(+) = 3'-dephospho-CoA + diphosphate. The protein operates within cofactor biosynthesis; coenzyme A biosynthesis; CoA from (R)-pantothenate: step 4/5. Its function is as follows. Reversibly transfers an adenylyl group from ATP to 4'-phosphopantetheine, yielding dephospho-CoA (dPCoA) and pyrophosphate. The sequence is that of Phosphopantetheine adenylyltransferase from Bacillus cereus (strain G9842).